Consider the following 92-residue polypeptide: Small ribosomal subunit protein uS19 (92 aa).

The protein belongs to the universal ribosomal protein uS19 family.

Functionally, protein S19 forms a complex with S13 that binds strongly to the 16S ribosomal RNA. The polypeptide is Small ribosomal subunit protein uS19 (Bartonella bacilliformis (strain ATCC 35685 / KC583 / Herrer 020/F12,63)).